The chain runs to 316 residues: Probable cell division protein WhiA (316 aa).

Positions 280-313 form a DNA-binding region, H-T-H motif; that stretch reads SLKELGEMLEPPVGKSGVNHRLRKIEKIAEELRT.

Belongs to the WhiA family.

In terms of biological role, involved in cell division and chromosome segregation. The protein is Probable cell division protein WhiA of Clostridium perfringens (strain ATCC 13124 / DSM 756 / JCM 1290 / NCIMB 6125 / NCTC 8237 / Type A).